We begin with the raw amino-acid sequence, 202 residues long: Mitochondrial import receptor subunit TOM20-3 (202 aa).

An N-acetylmethionine modification is found at Met1. The Cytoplasmic portion of the chain corresponds to 1-174; that stretch reads MDTETEFDRI…NKKSSDAKYD (174 aa). 2 TPR repeats span residues 38–74 and 86–119; these read GGVLLELSQFHSISDAKQMIQEAITKFEEALLIDPKK and TSFAFLTPDETEAKHNFDLATQFFQQAVDEQPDN. The segment at 146 to 166 is disordered; sequence SQPMGRVEAPAPPSSKAVKNK. A helical membrane pass occupies residues 175–192; it reads AMGWVILAIGVVAWISFA. Topologically, residues 193–202 are mitochondrial intermembrane; that stretch reads KANVPVSPPR.

Belongs to the Tom20 family. In terms of assembly, forms part of the preprotein translocase complex of the outer mitochondrial membrane (TOM complex) which consists of at least 6 different proteins (TOM5, TOM6, TOM7, TOM20, TOM22/TOM9 and TOM40). Component of a mitochondrial large protein complex that contains, at least, MIC60, DGS1, TOM40, TOM20 proteins, and petC/RISP. Post-translationally, the N-terminus is blocked. In terms of tissue distribution, expressed in roots, flowers, young cotyledons and leaves.

It is found in the mitochondrion outer membrane. Central component of the receptor complex responsible for the recognition and translocation of cytosolically synthesized mitochondrial preproteins. Together with TOM22 functions as the transit peptide receptor at the surface of the mitochondrion outer membrane and facilitates the movement of preproteins into the translocation pore. This chain is Mitochondrial import receptor subunit TOM20-3, found in Arabidopsis thaliana (Mouse-ear cress).